We begin with the raw amino-acid sequence, 265 residues long: Apolipoprotein A-I (265 aa).

The N-terminal stretch at 1-20 (METKAVVLTLAVLFLTGSQA) is a signal peptide. Repeat copies occupy residues 69–90 (LKIL…EQMR) and 91–112 (PIFQ…EVLN). A 10 X approximate tandem repeats region spans residues 69-265 (LKILDNWDTL…DEATKKLNSQ (197 aa)). The 3; half-length repeat unit spans residues 113 to 123 (KDLEELKQKVQ). Tandem repeats lie at residues 124 to 145 (PYLD…QKMA), 146 to 167 (PLGT…EKLG), 168 to 189 (PLGE…TQLA), 190 to 209 (PYTE…LKES), and 210 to 230 (NLAE…ENAK). Position 195 is a methionine sulfoxide (methionine 195). One copy of the 9; half-length repeat lies at 231-241 (PALEDFRQGLM). Methionine 241 bears the Methionine sulfoxide mark. The stretch at 242–265 (PVLEGFQKSVLAALDEATKKLNSQ) is repeat 10.

This sequence belongs to the apolipoprotein A1/A4/E family. As to quaternary structure, homodimer. Interacts with APOA1BP and CLU. Component of a sperm activating protein complex (SPAP), consisting of APOA1, an immunoglobulin heavy chain, an immunoglobulin light chain and albumin. Interacts with NDRG1. Interacts with SCGB3A2. Interacts with NAXE and YJEFN3. Glycosylated. In terms of processing, palmitoylated. Post-translationally, phosphorylation sites are present in the extracellular medium. In terms of tissue distribution, major protein of plasma HDL, also found in chylomicrons.

It is found in the secreted. Functionally, participates in the reverse transport of cholesterol from tissues to the liver for excretion by promoting cholesterol efflux from tissues and by acting as a cofactor for the lecithin cholesterol acyltransferase (LCAT). As part of the SPAP complex, activates spermatozoa motility. This is Apolipoprotein A-I (APOA1) from Orycteropus afer (Aardvark).